The chain runs to 351 residues: Rhodopsin (351 aa).

The Extracellular portion of the chain corresponds to 1-36 (MNGTEGQDFYVPMSNKTGVVRSPFEYPQYYLAEPWK). Residues asparagine 2 and asparagine 15 are each glycosylated (N-linked (GlcNAc...) asparagine). A helical membrane pass occupies residues 37–61 (FSALAAYMFMLILLGFPVNFLTLYV). Over 62-73 (TIQHKKLRTPLN) the chain is Cytoplasmic. The helical transmembrane segment at 74–96 (YILLNLVVADLFMVFGGFTTTMY) threads the bilayer. The Extracellular segment spans residues 97–110 (TSMNGYFVFGVTGC). Cysteine 110 and cysteine 187 are joined by a disulfide. A helical transmembrane segment spans residues 111-133 (YIEGFFATLGGEIALWSLVVLAV). The 'Ionic lock' involved in activated form stabilization signature appears at 134 to 136 (ERY). Residues 134 to 152 (ERYVVVCKPMSNFRFGENH) are Cytoplasmic-facing. The chain crosses the membrane as a helical span at residues 153–173 (AIMGVAFSWIMAMACAAPPLF). Residues 174-202 (GWSRYIPEGMQCSCGIDYYTLKPEINNES) lie on the Extracellular side of the membrane. The chain crosses the membrane as a helical span at residues 203–224 (FVIYMFVVHFMIPLAVIFFCYG). The Cytoplasmic portion of the chain corresponds to 225 to 252 (NLVCTVKEAAAQQQESATTQKAEKEVTR). Residues 253 to 274 (MVIIMVIAFLICWVPYASVAFY) traverse the membrane as a helical segment. The Extracellular segment spans residues 275-286 (IFTNQGSDFGPI). The helical transmembrane segment at 287-308 (FMTIPAFFAKSSAIYNPVIYIV) threads the bilayer. An N6-(retinylidene)lysine modification is found at lysine 296. Topologically, residues 309-351 (MNKQFRNCMITTLCCGKNPLGDEDTSAGKTETSSVSTSQVSPA) are cytoplasmic. Residues cysteine 322 and cysteine 323 are each lipidated (S-palmitoyl cysteine). Positions 331 to 351 (EDTSAGKTETSSVSTSQVSPA) are disordered. Over residues 340–351 (TSSVSTSQVSPA) the composition is skewed to low complexity. A Phosphoserine; by RK and GRK7 modification is found at serine 341.

This sequence belongs to the G-protein coupled receptor 1 family. Opsin subfamily. Post-translationally, contains one covalently linked retinal chromophore. Upon light absorption, the covalently bound 11-cis-retinal is converted to all-trans-retinal. After hydrolysis of the Schiff base and release of the covalently bound all-trans-retinal, active rhodopsin is regenerated by binding of a fresh molecule of 11-cis-retinal.

It localises to the membrane. Its subcellular location is the cell projection. The protein localises to the cilium. It is found in the photoreceptor outer segment. Functionally, photoreceptor required for image-forming vision at low light intensity. Required for photoreceptor cell viability after birth. Light-induced isomerization of 11-cis to all-trans retinal triggers a conformational change that activates signaling via G-proteins. Subsequent receptor phosphorylation mediates displacement of the bound G-protein alpha subunit by arrestin and terminates signaling. The chain is Rhodopsin (RHO) from Gallus gallus (Chicken).